The chain runs to 831 residues: MKLSRRDFMKANAAVAAAAAAGLTIPTVAKAVVGETTNAIKWDKAPCRFCGTGCGVLVGTQNGRIVASQGDPDSPVNRGLNCVKGYFLPKIMYGKDRLTQPLLRMKDGQYDKEGDFTPISWEKAFDIMELKFKNALKEKGPTAVGMFGSGQWTVWEGYAASKLLKAGFRSNNLDPNARHCMASSVVGFMRTFGMDEPMGCYDDIEEADAFVLWGSNMAEMHPILWSRMTSRRLTNEHVRIAVLSTFEHRSFELADNPIVFTPQTDLVIMNYIANYIIQNNAVDQGFLDRHVNFRRGATDIGYGLRPTHPLEKAAKNPGSDASEPMSFDDFKAFVAEYTLEKTAKMSGVPEDQLESLAQLYADPKVKLVSYWTMGFNQHTRGVWANNMCYNLHLLTGKISKPGSGPFSLTGQPSACGTAREVGTFSHRLPADMVVTNEKHRQIAETKWQLPAGTIPEKVGLHAVAQDRALKDGTLNAYWVMCNNNMQAGPNINEERMPGWRDPRNFIVVSDPYPTISALAADLILPTAMWVEKEGAYGNAERRTQFWRQQVPAPGEAKSDLWQMVEFAKRFKVEEVWPDELINKKPEYRGKTLYDVLFANNVVNKYPLSEIPADQLNDEARDFGFYIQKGLFEEYADFGRGHGHDLAPFDRYHQERGLRWPVVNGKETLWRYREGFDPFVPKGEDVRFYGKPDGKAVIFALPYEPAAESPDQEYDLWLSTGRVLEHWHTGSMTRRVPELHRAFPEAVLFIHPLDAKARGLRRGDKVKVISRRGEVISLVETRGRNRPPQGLVYMPFFDAAQLVNNLTLDATDPLSKETDFKKCAVKLARVVA.

A signal peptide (tat-type signal) is located at residues 1–31; sequence MKLSRRDFMKANAAVAAAAAAGLTIPTVAKA. The 4Fe-4S Mo/W bis-MGD-type domain occupies 40-96; sequence IKWDKAPCRFCGTGCGVLVGTQNGRIVASQGDPDSPVNRGLNCVKGYFLPKIMYGKD. [4Fe-4S] cluster contacts are provided by cysteine 47, cysteine 50, cysteine 54, and cysteine 82. Residues lysine 84, glutamine 151, asparagine 176, cysteine 180, 213–220, 244–248, 263–265, methionine 373, glutamine 377, asparagine 483, 509–510, lysine 532, aspartate 559, and 719–728 each bind Mo-bis(molybdopterin guanine dinucleotide); these read WGSNMAEM, STFEH, QTD, SD, and TGRVLEHWHT. Phenylalanine 795 contacts substrate. Mo-bis(molybdopterin guanine dinucleotide)-binding residues include asparagine 803 and lysine 820.

The protein belongs to the prokaryotic molybdopterin-containing oxidoreductase family. NasA/NapA/NarB subfamily. In terms of assembly, component of the periplasmic nitrate reductase NapAB complex composed of NapA and NapB. [4Fe-4S] cluster is required as a cofactor. It depends on Mo-bis(molybdopterin guanine dinucleotide) as a cofactor. Post-translationally, predicted to be exported by the Tat system. The position of the signal peptide cleavage has not been experimentally proven.

Its subcellular location is the periplasm. It catalyses the reaction 2 Fe(II)-[cytochrome] + nitrate + 2 H(+) = 2 Fe(III)-[cytochrome] + nitrite + H2O. Its function is as follows. Catalytic subunit of the periplasmic nitrate reductase complex NapAB. Receives electrons from NapB and catalyzes the reduction of nitrate to nitrite. In Yersinia enterocolitica serotype O:8 / biotype 1B (strain NCTC 13174 / 8081), this protein is Periplasmic nitrate reductase.